The following is a 542-amino-acid chain: Putative sodium-dependent excitatory amino acid transporter glt-6 (542 aa).

Residues 1-15 (MKSKRRDDIVQFCRE) lie on the Cytoplasmic side of the membrane. Helical transmembrane passes span 16–36 (NTLL…GFGL), 55–75 (IFMQ…LISA), and 93–113 (LYYL…VTVI). The Extracellular portion of the chain corresponds to 114–191 (HPGDPSIKGT…IVKRSIGMTK (78 aa)). A glycan (N-linked (GlcNAc...) asparagine) is linked at N175. 5 consecutive transmembrane segments (helical) span residues 192 to 212 (GMNI…ISQL), 234 to 254 (VVTL…GNLL), 265 to 285 (VLAL…IITV), 303 to 323 (GMIQ…TLPM), and 386 to 406 (TIAS…LLIL). Low complexity predominate over residues 505–517 (RIGSRIGSRRPSS). Residues 505 to 542 (RIGSRIGSRRPSSTNLHLSWRNNNIEPPYTPLPNDENV) are disordered. A compositionally biased stretch (polar residues) spans 518–529 (TNLHLSWRNNNI).

The protein belongs to the dicarboxylate/amino acid:cation symporter (DAACS) (TC 2.A.23) family.

The protein localises to the membrane. This Caenorhabditis elegans protein is Putative sodium-dependent excitatory amino acid transporter glt-6 (glt-6).